Consider the following 200-residue polypeptide: Glycerol-3-phosphate acyltransferase (200 aa).

4 consecutive transmembrane segments (helical) span residues 1-21, 84-104, 116-136, and 159-179; these read MITV…FAVV, VIAG…FLAF, ILLG…MVVA, and FLLE…LLIL.

This sequence belongs to the PlsY family. In terms of assembly, probably interacts with PlsX.

The protein resides in the cell inner membrane. It carries out the reaction an acyl phosphate + sn-glycerol 3-phosphate = a 1-acyl-sn-glycero-3-phosphate + phosphate. Its pathway is lipid metabolism; phospholipid metabolism. Its function is as follows. Catalyzes the transfer of an acyl group from acyl-phosphate (acyl-PO(4)) to glycerol-3-phosphate (G3P) to form lysophosphatidic acid (LPA). This enzyme utilizes acyl-phosphate as fatty acyl donor, but not acyl-CoA or acyl-ACP. The chain is Glycerol-3-phosphate acyltransferase from Nitrosomonas europaea (strain ATCC 19718 / CIP 103999 / KCTC 2705 / NBRC 14298).